The sequence spans 185 residues: Elongation factor P 1 (185 aa).

Belongs to the elongation factor P family.

It is found in the cytoplasm. It functions in the pathway protein biosynthesis; polypeptide chain elongation. Functionally, involved in peptide bond synthesis. Stimulates efficient translation and peptide-bond synthesis on native or reconstituted 70S ribosomes in vitro. Probably functions indirectly by altering the affinity of the ribosome for aminoacyl-tRNA, thus increasing their reactivity as acceptors for peptidyl transferase. In Chlamydia caviae (strain ATCC VR-813 / DSM 19441 / 03DC25 / GPIC) (Chlamydophila caviae), this protein is Elongation factor P 1 (efp1).